A 514-amino-acid polypeptide reads, in one-letter code: MAGGAFIDESGHGGDYEGRVTAFVMITCIVAAMGGLLFGYDIGISGGVISMEDFLTKFFPDVLRQMQNKRGRETEYCKYDNELLTLFTSSLYLAALFASFLASTITRLFGRKVSMVIGSLAFLSGALLNGLAINLEMLIIGRLFLGVGVGFANQSVPLYLSEMAPAKIRGALNIGFQLAITIGILAANIVNYVTPKLQNGIGWRLSLGLAGVPAVMMLVGCFFLPDTPNSILERGNKEKAKEMLQKIRGTMEVEHEFNELCNACEAAKKVKHPWTNIMQARYRPQLTFCTFIPFFQQLTGINVIMFYAPVLFKTIGFGNDASLISAVITGLVNVLSTIVSIYSVDKFGRRALFLQGGFQMIVTQIAVGSMIGWKFGFNGEGNLSGVDADIILALICLYVAGFAWSWGPLGWLVPSEICPLEIRSAGQSLNVSVNMFFTFFIGQFFLTMLCHMKFGLFYFFAGMVLIMTIFIYFLLPETKGVPIEEMGKVWKEHRYWGKYSNNDDGDDVDDDAYF.

Residues 1-19 lie on the Cytoplasmic side of the membrane; it reads MAGGAFIDESGHGGDYEGR. The helical transmembrane segment at 20 to 40 threads the bilayer; that stretch reads VTAFVMITCIVAAMGGLLFGY. The Extracellular segment spans residues 41–82; sequence DIGISGGVISMEDFLTKFFPDVLRQMQNKRGRETEYCKYDNE. A helical transmembrane segment spans residues 83–103; sequence LLTLFTSSLYLAALFASFLAS. Residues 104–112 lie on the Cytoplasmic side of the membrane; sequence TITRLFGRK. The chain crosses the membrane as a helical span at residues 113 to 133; it reads VSMVIGSLAFLSGALLNGLAI. Topologically, residues 134–137 are extracellular; that stretch reads NLEM. Residues 138-158 traverse the membrane as a helical segment; the sequence is LIIGRLFLGVGVGFANQSVPL. Over 159–169 the chain is Cytoplasmic; that stretch reads YLSEMAPAKIR. Residues 170–190 form a helical membrane-spanning segment; sequence GALNIGFQLAITIGILAANIV. Topologically, residues 191–204 are extracellular; the sequence is NYVTPKLQNGIGWR. A helical membrane pass occupies residues 205-225; sequence LSLGLAGVPAVMMLVGCFFLP. The Cytoplasmic portion of the chain corresponds to 226–290; the sequence is DTPNSILERG…RYRPQLTFCT (65 aa). A helical membrane pass occupies residues 291-311; the sequence is FIPFFQQLTGINVIMFYAPVL. Over 312-320 the chain is Extracellular; that stretch reads FKTIGFGND. The chain crosses the membrane as a helical span at residues 321–341; the sequence is ASLISAVITGLVNVLSTIVSI. The Cytoplasmic segment spans residues 342–350; it reads YSVDKFGRR. Residues 351–371 form a helical membrane-spanning segment; it reads ALFLQGGFQMIVTQIAVGSMI. The Extracellular segment spans residues 372-389; that stretch reads GWKFGFNGEGNLSGVDAD. The helical transmembrane segment at 390-410 threads the bilayer; the sequence is IILALICLYVAGFAWSWGPLG. The Cytoplasmic segment spans residues 411–428; it reads WLVPSEICPLEIRSAGQS. A helical membrane pass occupies residues 429–449; the sequence is LNVSVNMFFTFFIGQFFLTML. The Extracellular portion of the chain corresponds to 450–453; the sequence is CHMK. Residues 454–474 traverse the membrane as a helical segment; sequence FGLFYFFAGMVLIMTIFIYFL. At 475 to 514 the chain is on the cytoplasmic side; the sequence is LPETKGVPIEEMGKVWKEHRYWGKYSNNDDGDDVDDDAYF.

Belongs to the major facilitator superfamily. Sugar transporter (TC 2.A.1.1) family. Specifically expressed in germinating pollen and pollen tube (at protein level).

Its subcellular location is the cell membrane. Its activity is regulated as follows. Inhibited by uncouplers such as 2,4-dinitrophenol and carbonyl cyanide-m-chlorophenyl-hydrazone. Functionally, mediates an active uptake of hexoses, probably by sugar/hydrogen symport. Can transport glucose, galactose, mannose, xylose and 3-O-methylglucose, but not fructose and ribose. This chain is Sugar transport protein 11 (STP11), found in Arabidopsis thaliana (Mouse-ear cress).